We begin with the raw amino-acid sequence, 185 residues long: Ribosome-recycling factor (185 aa).

This sequence belongs to the RRF family.

The protein localises to the cytoplasm. In terms of biological role, responsible for the release of ribosomes from messenger RNA at the termination of protein biosynthesis. May increase the efficiency of translation by recycling ribosomes from one round of translation to another. This Clostridium botulinum (strain Eklund 17B / Type B) protein is Ribosome-recycling factor.